Consider the following 180-residue polypeptide: Large ribosomal subunit protein uL5 (180 aa).

It belongs to the universal ribosomal protein uL5 family. In terms of assembly, part of the 50S ribosomal subunit; part of the 5S rRNA/L5/L18/L25 subcomplex. Contacts the 5S rRNA and the P site tRNA. Forms a bridge to the 30S subunit in the 70S ribosome.

Its function is as follows. This is one of the proteins that bind and probably mediate the attachment of the 5S RNA into the large ribosomal subunit, where it forms part of the central protuberance. In the 70S ribosome it contacts protein S13 of the 30S subunit (bridge B1b), connecting the 2 subunits; this bridge is implicated in subunit movement. Contacts the P site tRNA; the 5S rRNA and some of its associated proteins might help stabilize positioning of ribosome-bound tRNAs. This Streptococcus pyogenes serotype M49 (strain NZ131) protein is Large ribosomal subunit protein uL5.